We begin with the raw amino-acid sequence, 753 residues long: Probable phosphoenolpyruvate synthase (753 aa).

H398 serves as the catalytic Tele-phosphohistidine intermediate. Substrate-binding residues include R488, R535, E631, G653, T654, N655, and D656. A Mg(2+)-binding site is contributed by E631. D656 is a Mg(2+) binding site. The active-site Proton donor is the C703.

This sequence belongs to the PEP-utilizing enzyme family. Mg(2+) is required as a cofactor.

The enzyme catalyses pyruvate + ATP + H2O = phosphoenolpyruvate + AMP + phosphate + 2 H(+). It functions in the pathway carbohydrate biosynthesis; gluconeogenesis. Its function is as follows. Catalyzes the phosphorylation of pyruvate to phosphoenolpyruvate. This Archaeoglobus fulgidus (strain ATCC 49558 / DSM 4304 / JCM 9628 / NBRC 100126 / VC-16) protein is Probable phosphoenolpyruvate synthase (ppsA).